The primary structure comprises 119 residues: Beta-2-microglobulin (119 aa).

Positions 1–20 (MACFVVVALLVLLSLSGLEA) are cleaved as a signal peptide. The region spanning 25-114 (PKIQVYSRHP…VTFSTPKTVK (90 aa)) is the Ig-like C1-type domain. Cys-45 and Cys-100 are joined by a disulfide.

The protein belongs to the beta-2-microglobulin family. As to quaternary structure, heterodimer of an alpha chain and a beta chain. Beta-2-microglobulin is the beta-chain of major histocompatibility complex class I molecules.

The protein localises to the secreted. In terms of biological role, component of the class I major histocompatibility complex (MHC). Involved in the presentation of peptide antigens to the immune system. The sequence is that of Beta-2-microglobulin (B2M) from Leontopithecus chrysopygus (Golden-rumped lion tamarin).